We begin with the raw amino-acid sequence, 543 residues long: Glucose transporter HT1 (543 aa).

The segment at 1–24 (MPEYPTEDTNASGKTSGSSPDDHT) is disordered. Residues 1–38 (MPEYPTEDTNASGKTSGSSPDDHTDDNAPSFFSCENLC) are Cytoplasmic-facing. Over residues 7 to 19 (EDTNASGKTSGSS) the composition is skewed to polar residues. The helical transmembrane segment at 39–59 (IVQVPVSTGSLNGFSIGFVAV) threads the bilayer. The Extracellular portion of the chain corresponds to 60–120 (YMHLYEIFSG…GSGYNSLESG (61 aa)). Asn90 and Asn91 each carry an N-linked (GlcNAc...) asparagine glycan. A helical transmembrane segment spans residues 121 to 141 (LFACSMIVGSMIGSIFAGKFL). Topologically, residues 142–147 (SKFGLK) are cytoplasmic. Residues 148–168 (MSFIVSGVLGIVGSALIHVAT) traverse the membrane as a helical segment. Topologically, residues 169-172 (RGST) are extracellular. The helical transmembrane segment at 173–193 (LWVMCVGRFLMGLVLGLVCVA) threads the bilayer. Residues 194-212 (SPMYVNENAHPKYRKTIGV) lie on the Cytoplasmic side of the membrane. A helical membrane pass occupies residues 213–233 (LFQVFTTFGIMFAALLGLAIV). Residues 234 to 248 (KTPGHDKASGLLWRM) lie on the Extracellular side of the membrane. The chain crosses the membrane as a helical span at residues 249–269 (QVFCSVSTALSALLLVLGLVV). Over 270-300 (RKSKTSFAGGVDSAGEGVLDPNEYSVRQMLG) the chain is Cytoplasmic. A helical transmembrane segment spans residues 301-321 (PLAVGAVTAGTLQLTGINAVM). The Extracellular segment spans residues 322-337 (NYAPEIMRNIGMDPME). A helical transmembrane segment spans residues 338–358 (GNSAVMSWNFVTALVAIPLVS). Over 359–364 (RFTMRQ) the chain is Cytoplasmic. A helical membrane pass occupies residues 365-385 (LFLACSFMASCACLIMCGIPV). The Extracellular portion of the chain corresponds to 386-400 (YPGVASVDNRNIVAT). A helical transmembrane segment spans residues 401 to 421 (VGIAVFIAAFEFGVGSCFFVL). Residues 422–436 (AQDLFPRSFRPTGSS) lie on the Cytoplasmic side of the membrane. Residues 437–457 (FVVMAQFIFNIMINLLYPITV) form a helical membrane-spanning segment. Topologically, residues 458 to 470 (EAISGGKGKSPEK) are extracellular. Residues 471–491 (GQSVSFIIFGIIGIICFVLQL) traverse the membrane as a helical segment. The Cytoplasmic segment spans residues 492–543 (RYLTPWEDGQGTSTSPTARCNAPTSPNNGEGEPATADMSPVEMSTPKHSGAA). Residues 503-519 (TSTSPTARCNAPTSPNN) are compositionally biased toward polar residues. The interval 503-543 (TSTSPTARCNAPTSPNNGEGEPATADMSPVEMSTPKHSGAA) is disordered.

This sequence belongs to the major facilitator superfamily. Sugar transporter (TC 2.A.1.1) family.

Its subcellular location is the membrane. Facilitative glucose transporter. Binds D-fructose and cytochalasin-B, but not D-galactose. This is Glucose transporter HT1 (HT1) from Trypanosoma vivax (Duttonella vivax).